Reading from the N-terminus, the 459-residue chain is ATP-binding protein Uup-like (459 aa).

The region spanning Phe132–Ala350 is the ABC transporter domain. Gly164 to Thr171 is a binding site for ATP. Over residues Ala357–Ser375 the composition is skewed to basic and acidic residues. The interval Ala357–Lys381 is disordered.

This sequence belongs to the ABC transporter superfamily. ABCF family. Uup subfamily.

The protein localises to the cytoplasm. The catalysed reaction is ATP + H2O = ADP + phosphate + H(+). Its function is as follows. Might play a role in ribosome assembly or function; this is missing the first ABC transporter domain compared to paralogs. The polypeptide is ATP-binding protein Uup-like (uup-B) (Haemophilus influenzae (strain ATCC 51907 / DSM 11121 / KW20 / Rd)).